The chain runs to 208 residues: Uracil phosphoribosyltransferase (208 aa).

Residues R78, R103, and 130 to 138 (DPMLATGGT) each bind 5-phospho-alpha-D-ribose 1-diphosphate. Uracil is bound by residues I193 and 198–200 (GDA). Position 199 (D199) interacts with 5-phospho-alpha-D-ribose 1-diphosphate.

This sequence belongs to the UPRTase family. Requires Mg(2+) as cofactor.

It catalyses the reaction UMP + diphosphate = 5-phospho-alpha-D-ribose 1-diphosphate + uracil. It participates in pyrimidine metabolism; UMP biosynthesis via salvage pathway; UMP from uracil: step 1/1. Its activity is regulated as follows. Allosterically activated by GTP. Functionally, catalyzes the conversion of uracil and 5-phospho-alpha-D-ribose 1-diphosphate (PRPP) to UMP and diphosphate. The chain is Uracil phosphoribosyltransferase from Desulfotalea psychrophila (strain LSv54 / DSM 12343).